The following is a 334-amino-acid chain: Beta-ketoacyl-[acyl-carrier-protein] synthase III (334 aa).

Active-site residues include cysteine 116 and histidine 256. The ACP-binding stretch occupies residues 257–261 (QANLR). Asparagine 286 is an active-site residue.

Belongs to the thiolase-like superfamily. FabH family. In terms of assembly, homodimer.

The protein resides in the cytoplasm. It catalyses the reaction malonyl-[ACP] + acetyl-CoA + H(+) = 3-oxobutanoyl-[ACP] + CO2 + CoA. Its pathway is lipid metabolism; fatty acid biosynthesis. Its function is as follows. Catalyzes the condensation reaction of fatty acid synthesis by the addition to an acyl acceptor of two carbons from malonyl-ACP. Catalyzes the first condensation reaction which initiates fatty acid synthesis and may therefore play a role in governing the total rate of fatty acid production. Possesses both acetoacetyl-ACP synthase and acetyl transacylase activities. Its substrate specificity determines the biosynthesis of branched-chain and/or straight-chain of fatty acids. The chain is Beta-ketoacyl-[acyl-carrier-protein] synthase III from Phocaeicola vulgatus (strain ATCC 8482 / DSM 1447 / JCM 5826 / CCUG 4940 / NBRC 14291 / NCTC 11154) (Bacteroides vulgatus).